We begin with the raw amino-acid sequence, 511 residues long: Glucans biosynthesis protein G (511 aa).

The signal sequence occupies residues 1 to 22 (MMKMRWLGAAIMLTLYASSSWA).

It belongs to the OpgD/OpgG family.

It localises to the periplasm. It participates in glycan metabolism; osmoregulated periplasmic glucan (OPG) biosynthesis. Its function is as follows. Involved in the biosynthesis of osmoregulated periplasmic glucans (OPGs). This is Glucans biosynthesis protein G from Salmonella enteritidis PT4 (strain P125109).